The primary structure comprises 239 residues: EF-hand domain-containing protein D1 (239 aa).

Positions 1 to 18 are enriched in basic and acidic residues; sequence MASEELACKLERRLRREE. A disordered region spans residues 1–53; sequence MASEELACKLERRLRREEAEESGPQLAPLGAPAPEPKPEPEPPARAPTASADA. 2 consecutive EF-hand domains span residues 90 to 125 and 126 to 161; these read RLIK…LGAP and QTHL…AAAG. 8 residues coordinate Ca(2+): aspartate 103, aspartate 107, glutamate 114, aspartate 139, aspartate 141, aspartate 143, lysine 145, and glutamate 150. Residue serine 201 is modified to Phosphoserine.

The protein resides in the mitochondrion inner membrane. Acts as a calcium sensor for mitochondrial flash (mitoflash) activation, an event characterized by stochastic bursts of superoxide production. May play a role in neuronal differentiation. The chain is EF-hand domain-containing protein D1 (EFHD1) from Homo sapiens (Human).